Reading from the N-terminus, the 478-residue chain is tRNA modification GTPase MnmE (478 aa).

(6S)-5-formyl-5,6,7,8-tetrahydrofolate contacts are provided by arginine 25, glutamate 82, and lysine 135. A TrmE-type G domain is found at glycine 231–glycine 400. Asparagine 241 is a binding site for K(+). GTP-binding positions include asparagine 241–serine 246, threonine 260–threonine 266, and aspartate 285–glycine 288. Position 245 (serine 245) interacts with Mg(2+). Residues threonine 260, valine 262, and threonine 265 each contribute to the K(+) site. Threonine 266 provides a ligand contact to Mg(2+). Lysine 478 lines the (6S)-5-formyl-5,6,7,8-tetrahydrofolate pocket.

Belongs to the TRAFAC class TrmE-Era-EngA-EngB-Septin-like GTPase superfamily. TrmE GTPase family. As to quaternary structure, homodimer. Heterotetramer of two MnmE and two MnmG subunits. K(+) serves as cofactor.

The protein resides in the cytoplasm. Its function is as follows. Exhibits a very high intrinsic GTPase hydrolysis rate. Involved in the addition of a carboxymethylaminomethyl (cmnm) group at the wobble position (U34) of certain tRNAs, forming tRNA-cmnm(5)s(2)U34. In Polaromonas naphthalenivorans (strain CJ2), this protein is tRNA modification GTPase MnmE.